The chain runs to 1079 residues: Lon protease homolog, mitochondrial (1079 aa).

The transit peptide at 1–60 (MLRPRTYVRKLAWRCPRKSQLGLRLATSVSSHKSLPLPMNFDISHSQSAFRAYQDIIHRN) directs the protein to the mitochondrion. Over residues 61-116 (KSVGDDEPSQRSENENNPSESDKDSNQDPETPKKDKESENDKEPEKEKDIENDNKV) the composition is skewed to basic and acidic residues. Disordered stretches follow at residues 61–158 (KSVG…VDPV) and 262–285 (LTTP…ESFP). Polar residues predominate over residues 117–131 (SSESNENVTLASSNT). Positions 132–143 (GGAAPPNGNNNG) are enriched in low complexity. Residues 165–391 (LLAIPMKDRP…RALELLKVEL (227 aa)) form the Lon N-terminal domain. Residues 262 to 281 (LTTPSSEKEAKSEEPSKEDA) show a composition bias toward basic and acidic residues. Residue 543–550 (GPPGTGKT) coordinates ATP. Positions 756–765 (ALDSSKEKEG) are enriched in basic and acidic residues. The segment at 756–832 (ALDSSKEKEG…SEEDQQPEPK (77 aa)) is disordered. A compositionally biased stretch (low complexity) spans 768–779 (ASSEEANVNSES). A compositionally biased stretch (polar residues) spans 780–802 (TKSNTSQAEPVAESSTDISTKSK). Positions 803–818 (VASEKIETKEKKETNK) are enriched in basic and acidic residues. Positions 865–1053 (FPPPGVATGL…QEVFDKIFPN (189 aa)) constitute a Lon proteolytic domain. Residues Ser-959 and Lys-1002 contribute to the active site.

This sequence belongs to the peptidase S16 family. Homohexamer or homoheptamer. Organized in a ring with a central cavity.

It localises to the mitochondrion matrix. The enzyme catalyses Hydrolysis of proteins in presence of ATP.. Its function is as follows. ATP-dependent serine protease that mediates the selective degradation of misfolded, unassembled or oxidatively damaged polypeptides as well as certain short-lived regulatory proteins in the mitochondrial matrix. May also have a chaperone function in the assembly of inner membrane protein complexes. Participates in the regulation of mitochondrial gene expression and in the maintenance of the integrity of the mitochondrial genome. Binds to mitochondrial DNA in a site-specific manner. This chain is Lon protease homolog, mitochondrial, found in Debaryomyces hansenii (strain ATCC 36239 / CBS 767 / BCRC 21394 / JCM 1990 / NBRC 0083 / IGC 2968) (Yeast).